A 269-amino-acid polypeptide reads, in one-letter code: NAD kinase (269 aa).

Asp45 (proton acceptor) is an active-site residue. NAD(+) contacts are provided by residues 45–46 (DG), 122–123 (NE), Arg149, Asp151, and Ala186.

The protein belongs to the NAD kinase family. It depends on a divalent metal cation as a cofactor.

The protein localises to the cytoplasm. It carries out the reaction NAD(+) + ATP = ADP + NADP(+) + H(+). Functionally, involved in the regulation of the intracellular balance of NAD and NADP, and is a key enzyme in the biosynthesis of NADP. Catalyzes specifically the phosphorylation on 2'-hydroxyl of the adenosine moiety of NAD to yield NADP. This chain is NAD kinase, found in Staphylococcus epidermidis (strain ATCC 35984 / DSM 28319 / BCRC 17069 / CCUG 31568 / BM 3577 / RP62A).